Here is a 757-residue protein sequence, read N- to C-terminus: Polyribonucleotide nucleotidyltransferase (757 aa).

Asp482 and Asp488 together coordinate Mg(2+). Residues 549–608 (PRMLSFYIDKDKISAAIGSKGKNIRSVCERSNAKIEIGDDGKVSVFATSGTEAEIAKSMM) form the KH domain. In terms of domain architecture, S1 motif spans 618–686 (GSIVDVKVVR…KGGCPKLSRR (69 aa)). A disordered region spans residues 698–757 (GELYNEERKDGPNDRDNYYNNSFSRKPGGSHHKRPPRPHSGFSNRNRPKFGNNDSSSGFY). A compositionally biased stretch (basic and acidic residues) spans 702–714 (NEERKDGPNDRDN). The span at 725–734 (GGSHHKRPPR) shows a compositional bias: basic residues.

It belongs to the polyribonucleotide nucleotidyltransferase family. It depends on Mg(2+) as a cofactor.

It localises to the cytoplasm. It catalyses the reaction RNA(n+1) + phosphate = RNA(n) + a ribonucleoside 5'-diphosphate. Involved in mRNA degradation. Catalyzes the phosphorolysis of single-stranded polyribonucleotides processively in the 3'- to 5'-direction. The protein is Polyribonucleotide nucleotidyltransferase of Wolbachia pipientis wMel.